The primary structure comprises 400 residues: MAKEKFVRTKPHVNVGTIGHIDHGKSTLTAAITKYLSLKGLAQYIPYDQIDKAPEEKARGITINITHVEYETEKRHYAHIDCPGHADYIKNMITGAAQMDGAILVVAATDGPMPQTREHVLLARQVEVPYMIVFINKTDMVDDPELIDLVEMEVRDLLSQYGYPGDEVPVIRGSALKAVEAPNDPNHEAYKPIQELLDAMDNYIPDPQRDVDKPFLMPIEDVFSITGRGTVVTGRIERGRIRPGDEVEIIGLSYEIKKTVVTSVEMFRKELDEGIAGDNVGCLLRGIDKDEVERGQVLAAPGSIKPHKRFKAQIYVLKKEEGGRHTPFTKGYKPQFYIRTADVTGEIVGLPEGVEMVMPGDHVEMEIELIYPVAIEKGQRFAVREGGRTVGAGVVTEVIE.

The region spanning 10 to 208 (KPHVNVGTIG…AMDNYIPDPQ (199 aa)) is the tr-type G domain. A G1 region spans residues 19–26 (GHIDHGKS). 19–26 (GHIDHGKS) provides a ligand contact to GTP. Ser-26 provides a ligand contact to Mg(2+). The G2 stretch occupies residues 60-64 (GITIN). The segment at 81 to 84 (DCPG) is G3. GTP is bound by residues 81-85 (DCPGH) and 136-139 (NKTD). The G4 stretch occupies residues 136–139 (NKTD). The tract at residues 174-176 (SAL) is G5.

It belongs to the TRAFAC class translation factor GTPase superfamily. Classic translation factor GTPase family. EF-Tu/EF-1A subfamily. In terms of assembly, monomer.

It is found in the cytoplasm. The catalysed reaction is GTP + H2O = GDP + phosphate + H(+). GTP hydrolase that promotes the GTP-dependent binding of aminoacyl-tRNA to the A-site of ribosomes during protein biosynthesis. This Thermotoga maritima (strain ATCC 43589 / DSM 3109 / JCM 10099 / NBRC 100826 / MSB8) protein is Elongation factor Tu.